A 79-amino-acid polypeptide reads, in one-letter code: Small ribosomal subunit protein bS18 (79 aa).

The protein belongs to the bacterial ribosomal protein bS18 family. In terms of assembly, part of the 30S ribosomal subunit. Forms a tight heterodimer with protein bS6.

Its function is as follows. Binds as a heterodimer with protein bS6 to the central domain of the 16S rRNA, where it helps stabilize the platform of the 30S subunit. The chain is Small ribosomal subunit protein bS18 (rpsR) from Bacillus subtilis (strain 168).